The sequence spans 176 residues: Nucleoside triphosphate/diphosphate phosphatase (176 aa).

Arg-23 serves as the catalytic Proton donor. Residues Asn-87, Asp-103, Asp-105, Asp-107, Asp-120, and Glu-123 each coordinate Mg(2+).

It belongs to the Ntdp family. Requires Mg(2+) as cofactor.

The enzyme catalyses a ribonucleoside 5'-triphosphate + H2O = a ribonucleoside 5'-diphosphate + phosphate + H(+). It carries out the reaction a ribonucleoside 5'-diphosphate + H2O = a ribonucleoside 5'-phosphate + phosphate + H(+). Functionally, has nucleoside phosphatase activity towards nucleoside triphosphates and nucleoside diphosphates. The polypeptide is Nucleoside triphosphate/diphosphate phosphatase (Bacillus mycoides (strain KBAB4) (Bacillus weihenstephanensis)).